We begin with the raw amino-acid sequence, 626 residues long: Putative ankyrin repeat protein R837 (626 aa).

18 ANK repeats span residues 42 to 72 (EYFN…GLIR), 80 to 109 (TLNT…NHRY), 110 to 139 (SEDK…NIKS), 140 to 169 (RNNY…DITV), 171 to 199 (DYEV…DIKK), 201 to 230 (NKKR…DVYR), 242 to 269 (KNYK…YQLS), 270 to 298 (DTNN…LHEL), 299 to 328 (NLNQ…DINT), 330 to 358 (GNSC…RLTS), 393 to 416 (TIMS…KSSL), 417 to 446 (DYES…ITKQ), 452 to 479 (INNS…GINI), 480 to 509 (CINY…NINE), 510 to 539 (FGDL…NIYI), 540 to 569 (IKDN…DYHK), 570 to 599 (KNEL…KTKT), and 601 to 626 (FFDP…NEIK).

This is Putative ankyrin repeat protein R837 from Acanthamoeba polyphaga (Amoeba).